We begin with the raw amino-acid sequence, 196 residues long: ATP-dependent Clp protease proteolytic subunit (196 aa).

The active-site Nucleophile is Ser99. Residue His124 is part of the active site.

It belongs to the peptidase S14 family. In terms of assembly, fourteen ClpP subunits assemble into 2 heptameric rings which stack back to back to give a disk-like structure with a central cavity, resembling the structure of eukaryotic proteasomes.

The protein localises to the cytoplasm. It catalyses the reaction Hydrolysis of proteins to small peptides in the presence of ATP and magnesium. alpha-casein is the usual test substrate. In the absence of ATP, only oligopeptides shorter than five residues are hydrolyzed (such as succinyl-Leu-Tyr-|-NHMec, and Leu-Tyr-Leu-|-Tyr-Trp, in which cleavage of the -Tyr-|-Leu- and -Tyr-|-Trp bonds also occurs).. In terms of biological role, cleaves peptides in various proteins in a process that requires ATP hydrolysis. Has a chymotrypsin-like activity. Plays a major role in the degradation of misfolded proteins. The polypeptide is ATP-dependent Clp protease proteolytic subunit (Helicobacter pylori (strain ATCC 700392 / 26695) (Campylobacter pylori)).